A 26-amino-acid chain; its full sequence is Conotoxin Eb6.18 (26 aa).

2 cysteine pairs are disulfide-bonded: Cys7–Cys18 and Cys13–Cys25.

The protein belongs to the conotoxin O1 superfamily. Expressed by the venom duct.

It localises to the secreted. In Conus ebraeus (Hebrew cone), this protein is Conotoxin Eb6.18 (E1).